A 400-amino-acid chain; its full sequence is DNA primase large subunit PriL (400 aa).

C247, C356, C367, and C373 together coordinate [4Fe-4S] cluster.

Belongs to the eukaryotic-type primase large subunit family. Heterodimer of a small subunit (PriS) and a large subunit (PriL). It depends on [4Fe-4S] cluster as a cofactor.

In terms of biological role, regulatory subunit of DNA primase, an RNA polymerase that catalyzes the synthesis of short RNA molecules used as primers for DNA polymerase during DNA replication. Stabilizes and modulates the activity of the small subunit, increasing the rate of DNA synthesis, and conferring RNA synthesis capability. The DNA polymerase activity may enable DNA primase to also catalyze primer extension after primer synthesis. May also play a role in DNA repair. The sequence is that of DNA primase large subunit PriL from Thermococcus kodakarensis (strain ATCC BAA-918 / JCM 12380 / KOD1) (Pyrococcus kodakaraensis (strain KOD1)).